The primary structure comprises 399 residues: S-adenosylmethionine synthase (399 aa).

Residue His17 participates in ATP binding. Asp19 contacts Mg(2+). Residue Glu45 coordinates K(+). L-methionine is bound by residues Glu58 and Gln101. Positions 101–111 (QSADIAMGVDQ) are flexible loop. Residues 177 to 179 (DGK), 244 to 245 (RF), Asp253, 259 to 260 (RK), Ala276, and Lys280 each bind ATP. L-methionine is bound at residue Asp253. Lys284 serves as a coordination point for L-methionine.

It belongs to the AdoMet synthase family. Homotetramer; dimer of dimers. Requires Mg(2+) as cofactor. The cofactor is K(+).

It is found in the cytoplasm. The catalysed reaction is L-methionine + ATP + H2O = S-adenosyl-L-methionine + phosphate + diphosphate. It participates in amino-acid biosynthesis; S-adenosyl-L-methionine biosynthesis; S-adenosyl-L-methionine from L-methionine: step 1/1. Its function is as follows. Catalyzes the formation of S-adenosylmethionine (AdoMet) from methionine and ATP. The overall synthetic reaction is composed of two sequential steps, AdoMet formation and the subsequent tripolyphosphate hydrolysis which occurs prior to release of AdoMet from the enzyme. This chain is S-adenosylmethionine synthase, found in Bacillus thuringiensis subsp. konkukian (strain 97-27).